Reading from the N-terminus, the 87-residue chain is Large ribosomal subunit protein bL31B (87 aa).

The protein belongs to the bacterial ribosomal protein bL31 family. Type B subfamily. Part of the 50S ribosomal subunit.

The protein is Large ribosomal subunit protein bL31B of Paraburkholderia phymatum (strain DSM 17167 / CIP 108236 / LMG 21445 / STM815) (Burkholderia phymatum).